We begin with the raw amino-acid sequence, 371 residues long: 4-hydroxy-3-methylbut-2-en-1-yl diphosphate synthase (flavodoxin) (371 aa).

Residues C272, C275, C307, and E314 each coordinate [4Fe-4S] cluster.

It belongs to the IspG family. [4Fe-4S] cluster serves as cofactor.

The enzyme catalyses (2E)-4-hydroxy-3-methylbut-2-enyl diphosphate + oxidized [flavodoxin] + H2O + 2 H(+) = 2-C-methyl-D-erythritol 2,4-cyclic diphosphate + reduced [flavodoxin]. The protein operates within isoprenoid biosynthesis; isopentenyl diphosphate biosynthesis via DXP pathway; isopentenyl diphosphate from 1-deoxy-D-xylulose 5-phosphate: step 5/6. In terms of biological role, converts 2C-methyl-D-erythritol 2,4-cyclodiphosphate (ME-2,4cPP) into 1-hydroxy-2-methyl-2-(E)-butenyl 4-diphosphate. In Pseudomonas paraeruginosa (strain DSM 24068 / PA7) (Pseudomonas aeruginosa (strain PA7)), this protein is 4-hydroxy-3-methylbut-2-en-1-yl diphosphate synthase (flavodoxin).